The sequence spans 33 residues: Brevinin-2HSa (33 aa).

Residues Cys-27 and Cys-33 are joined by a disulfide bond.

As to expression, expressed by the skin glands.

The protein localises to the secreted. Has antibacterial activity against the Gram-positive bacterium S.aureus ATCC 25923 (MIC=18 uM) and the Gram-negative bacterium E.coli ATCC 25726 (MIC=36 uM). The protein is Brevinin-2HSa of Odorrana hosii (Hose's rock frog).